The following is a 486-amino-acid chain: UDP-N-acetylmuramate--L-alanine ligase (486 aa).

129–135 (GTHGKTT) provides a ligand contact to ATP.

It belongs to the MurCDEF family.

The protein localises to the cytoplasm. The catalysed reaction is UDP-N-acetyl-alpha-D-muramate + L-alanine + ATP = UDP-N-acetyl-alpha-D-muramoyl-L-alanine + ADP + phosphate + H(+). The protein operates within cell wall biogenesis; peptidoglycan biosynthesis. Its function is as follows. Cell wall formation. The chain is UDP-N-acetylmuramate--L-alanine ligase from Vibrio vulnificus (strain CMCP6).